The following is a 51-amino-acid chain: uncharacterized protein (51 aa).

This is an uncharacterized protein from Dictyostelium discoideum (Social amoeba).